Here is a 942-residue protein sequence, read N- to C-terminus: UvrABC system protein A (942 aa).

31-38 lines the ATP pocket; that stretch reads GLSGSGKS. A C4-type zinc finger spans residues 253-280; it reads CSECGYSLPELEPRLFSFNNPAGACPTC. ABC transporter domains follow at residues 310–586 and 606–936; these read WDRR…EASI and YDAN…RFLT. 639 to 646 is a binding site for ATP; it reads GVSGSGKS. Residues 739–765 form a C4-type zinc finger; it reads CEACQGDGVIKVEMHFLPDVYVPCDHC.

Belongs to the ABC transporter superfamily. UvrA family. Forms a heterotetramer with UvrB during the search for lesions.

Its subcellular location is the cytoplasm. Its function is as follows. The UvrABC repair system catalyzes the recognition and processing of DNA lesions. UvrA is an ATPase and a DNA-binding protein. A damage recognition complex composed of 2 UvrA and 2 UvrB subunits scans DNA for abnormalities. When the presence of a lesion has been verified by UvrB, the UvrA molecules dissociate. In Haemophilus ducreyi (strain 35000HP / ATCC 700724), this protein is UvrABC system protein A.